Here is a 244-residue protein sequence, read N- to C-terminus: Phosphatidylserine decarboxylase proenzyme (244 aa).

Serine 212 acts as the Schiff-base intermediate with substrate; via pyruvic acid in catalysis. Serine 212 is modified (pyruvic acid (Ser); by autocatalysis).

The protein belongs to the phosphatidylserine decarboxylase family. PSD-A subfamily. As to quaternary structure, heterodimer of a large membrane-associated beta subunit and a small pyruvoyl-containing alpha subunit. Pyruvate is required as a cofactor. Post-translationally, is synthesized initially as an inactive proenzyme. Formation of the active enzyme involves a self-maturation process in which the active site pyruvoyl group is generated from an internal serine residue via an autocatalytic post-translational modification. Two non-identical subunits are generated from the proenzyme in this reaction, and the pyruvate is formed at the N-terminus of the alpha chain, which is derived from the carboxyl end of the proenzyme. The post-translation cleavage follows an unusual pathway, termed non-hydrolytic serinolysis, in which the side chain hydroxyl group of the serine supplies its oxygen atom to form the C-terminus of the beta chain, while the remainder of the serine residue undergoes an oxidative deamination to produce ammonia and the pyruvoyl prosthetic group on the alpha chain.

The protein localises to the cell membrane. It carries out the reaction a 1,2-diacyl-sn-glycero-3-phospho-L-serine + H(+) = a 1,2-diacyl-sn-glycero-3-phosphoethanolamine + CO2. Its pathway is phospholipid metabolism; phosphatidylethanolamine biosynthesis; phosphatidylethanolamine from CDP-diacylglycerol: step 2/2. Functionally, catalyzes the formation of phosphatidylethanolamine (PtdEtn) from phosphatidylserine (PtdSer). The chain is Phosphatidylserine decarboxylase proenzyme from Granulibacter bethesdensis (strain ATCC BAA-1260 / CGDNIH1).